A 246-amino-acid chain; its full sequence is Ubiquinone biosynthesis O-methyltransferase (246 aa).

Arg44, Gly63, Asp84, and Met128 together coordinate S-adenosyl-L-methionine.

Belongs to the methyltransferase superfamily. UbiG/COQ3 family.

It carries out the reaction a 3-demethylubiquinol + S-adenosyl-L-methionine = a ubiquinol + S-adenosyl-L-homocysteine + H(+). It catalyses the reaction a 3-(all-trans-polyprenyl)benzene-1,2-diol + S-adenosyl-L-methionine = a 2-methoxy-6-(all-trans-polyprenyl)phenol + S-adenosyl-L-homocysteine + H(+). Its pathway is cofactor biosynthesis; ubiquinone biosynthesis. In terms of biological role, O-methyltransferase that catalyzes the 2 O-methylation steps in the ubiquinone biosynthetic pathway. This is Ubiquinone biosynthesis O-methyltransferase from Xylella fastidiosa (strain Temecula1 / ATCC 700964).